We begin with the raw amino-acid sequence, 217 residues long: MIRIIFLGPPGSGKGTQAHLIANKYNIPNISTGTMLRQALTRSTHKSYELHKNIMHTGDLVNDEFMVQLISTRINQNDCRNGFLLDGFPRTILQAKSMKQCKIFVNYIIEFFASDSVIIDRIAGRRIHVGSGRTYHIKFNPPRNYGLDDITGEILTTRKDDHEEAIRKRLSNYYQHTEPVLDYYREESKYKKMKYFSVDGNRDISKIYKELINIISS.

11–16 provides a ligand contact to ATP; the sequence is GSGKGT. The NMP stretch occupies residues 31–61; it reads STGTMLRQALTRSTHKSYELHKNIMHTGDLV. AMP-binding positions include Thr32, Arg37, 59-61, 87-90, and Gln94; these read DLV and GFPR. An LID region spans residues 124–161; the sequence is GRRIHVGSGRTYHIKFNPPRNYGLDDITGEILTTRKDD. Residues Arg125 and 134–135 each bind ATP; that span reads TY. 2 residues coordinate AMP: Arg158 and Arg169. Arg202 provides a ligand contact to ATP.

It belongs to the adenylate kinase family. In terms of assembly, monomer.

It is found in the cytoplasm. The enzyme catalyses AMP + ATP = 2 ADP. It functions in the pathway purine metabolism; AMP biosynthesis via salvage pathway; AMP from ADP: step 1/1. Its function is as follows. Catalyzes the reversible transfer of the terminal phosphate group between ATP and AMP. Plays an important role in cellular energy homeostasis and in adenine nucleotide metabolism. The sequence is that of Adenylate kinase from Blochmanniella pennsylvanica (strain BPEN).